Reading from the N-terminus, the 235-residue chain is ATP-dependent dethiobiotin synthetase BioD (235 aa).

12–17 (GVGKTF) contributes to the ATP binding site. T16 contacts Mg(2+). The active site involves K37. S41 contributes to the substrate binding site. Residues D51, 112-115 (EGAG), and 202-204 (PKL) contribute to the ATP site. 2 residues coordinate Mg(2+): D51 and E112.

The protein belongs to the dethiobiotin synthetase family. In terms of assembly, homodimer. The cofactor is Mg(2+).

It localises to the cytoplasm. The enzyme catalyses (7R,8S)-7,8-diammoniononanoate + CO2 + ATP = (4R,5S)-dethiobiotin + ADP + phosphate + 3 H(+). The protein operates within cofactor biosynthesis; biotin biosynthesis; biotin from 7,8-diaminononanoate: step 1/2. In terms of biological role, catalyzes a mechanistically unusual reaction, the ATP-dependent insertion of CO2 between the N7 and N8 nitrogen atoms of 7,8-diaminopelargonic acid (DAPA, also called 7,8-diammoniononanoate) to form a ureido ring. The polypeptide is ATP-dependent dethiobiotin synthetase BioD (Bacillus licheniformis (strain ATCC 14580 / DSM 13 / JCM 2505 / CCUG 7422 / NBRC 12200 / NCIMB 9375 / NCTC 10341 / NRRL NRS-1264 / Gibson 46)).